The primary structure comprises 226 residues: ATP synthase F(0) complex subunit a (226 aa).

Helical transmembrane passes span 6-26 (FAPF…IMIF), 68-88 (WTLM…LGLL), 97-117 (QLSM…LMGF), 138-158 (IPML…ALAV), 164-184 (ITAG…LSSI), and 193-213 (FTIL…QAYV).

Belongs to the ATPase A chain family. In terms of assembly, component of the ATP synthase complex composed at least of ATP5F1A/subunit alpha, ATP5F1B/subunit beta, ATP5MC1/subunit c (homooctomer), MT-ATP6/subunit a, MT-ATP8/subunit 8, ATP5ME/subunit e, ATP5MF/subunit f, ATP5MG/subunit g, ATP5MK/subunit k, ATP5MJ/subunit j, ATP5F1C/subunit gamma, ATP5F1D/subunit delta, ATP5F1E/subunit epsilon, ATP5PF/subunit F6, ATP5PB/subunit b, ATP5PD/subunit d, ATP5PO/subunit OSCP. ATP synthase complex consists of a soluble F(1) head domain (subunits alpha(3) and beta(3)) - the catalytic core - and a membrane F(0) domain - the membrane proton channel (subunits c, a, 8, e, f, g, k and j). These two domains are linked by a central stalk (subunits gamma, delta, and epsilon) rotating inside the F1 region and a stationary peripheral stalk (subunits F6, b, d, and OSCP). Interacts with DNAJC30; interaction is direct.

The protein localises to the mitochondrion inner membrane. The catalysed reaction is H(+)(in) = H(+)(out). Its function is as follows. Subunit a, of the mitochondrial membrane ATP synthase complex (F(1)F(0) ATP synthase or Complex V) that produces ATP from ADP in the presence of a proton gradient across the membrane which is generated by electron transport complexes of the respiratory chain. ATP synthase complex consist of a soluble F(1) head domain - the catalytic core - and a membrane F(1) domain - the membrane proton channel. These two domains are linked by a central stalk rotating inside the F(1) region and a stationary peripheral stalk. During catalysis, ATP synthesis in the catalytic domain of F(1) is coupled via a rotary mechanism of the central stalk subunits to proton translocation. With the subunit c (ATP5MC1), forms the proton-conducting channel in the F(0) domain, that contains two crucial half-channels (inlet and outlet) that facilitate proton movement from the mitochondrial intermembrane space (IMS) into the matrix. Protons are taken up via the inlet half-channel and released through the outlet half-channel, following a Grotthuss mechanism. The sequence is that of ATP synthase F(0) complex subunit a from Ornithorhynchus anatinus (Duckbill platypus).